Consider the following 386-residue polypeptide: F420 non-reducing hydrogenase I small subunit (386 aa).

Positions 1–51 (MVEMSTGTTNLVRTLDSMDFLKMDRRTFMKAVSALGATAFLGTYQTEIVNA) form a signal peptide, tat-type signal. Positions 67, 70, 178, 227, 273, 276, 296, and 302 each coordinate [4Fe-4S] cluster. 3 residues coordinate [3Fe-4S] cluster: Cys311, Cys330, and Cys333.

It belongs to the [NiFe]/[NiFeSe] hydrogenase small subunit family. In terms of assembly, composed of a large subunit (VhoA), a small subunit (VhoG) and a cytochrome subunit (VhoC). [4Fe-4S] cluster serves as cofactor. [3Fe-4S] cluster is required as a cofactor. Predicted to be exported by the Tat system. The position of the signal peptide cleavage has not been experimentally proven.

It is found in the cell membrane. It carries out the reaction methanophenazine + H2 = dihydromethanophenazine. Part of the F420 non-reducing hydrogenase I complex that catalyzes the reduction of methanophenazine to dihydromethanophenazine. This is F420 non-reducing hydrogenase I small subunit from Methanosarcina mazei (strain ATCC BAA-159 / DSM 3647 / Goe1 / Go1 / JCM 11833 / OCM 88) (Methanosarcina frisia).